We begin with the raw amino-acid sequence, 756 residues long: Catalase-peroxidase (756 aa).

The segment at residues 91 to 244 is a cross-link (tryptophyl-tyrosyl-methioninium (Trp-Tyr) (with M-270)); sequence WHSAGTYRTG…LAAVQMGLIY (154 aa). Residue His92 is the Proton acceptor of the active site. The segment at 198 to 230 is disordered; sequence AQKKMQQPGDGTLVAEPENHANEESRTASGERN. The span at 214–223 shows a compositional bias: basic and acidic residues; sequence PENHANEESR. Residues 244–270 constitute a cross-link (tryptophyl-tyrosyl-methioninium (Tyr-Met) (with W-91)); the sequence is YVNPEGPEGVPDPVASAKDIRETFGRM. Position 285 (His285) interacts with heme b. The interval 371–390 is disordered; the sequence is KNGAGAGKIPDAHDPSKRHA.

This sequence belongs to the peroxidase family. Peroxidase/catalase subfamily. In terms of assembly, homodimer or homotetramer. Heme b is required as a cofactor. In terms of processing, formation of the three residue Trp-Tyr-Met cross-link is important for the catalase, but not the peroxidase activity of the enzyme.

The catalysed reaction is H2O2 + AH2 = A + 2 H2O. It catalyses the reaction 2 H2O2 = O2 + 2 H2O. Functionally, bifunctional enzyme with both catalase and broad-spectrum peroxidase activity. The chain is Catalase-peroxidase from Pseudomonas savastanoi pv. phaseolicola (strain 1448A / Race 6) (Pseudomonas syringae pv. phaseolicola (strain 1448A / Race 6)).